A 95-amino-acid polypeptide reads, in one-letter code: Suppressor of silencing 2b (95 aa).

The tract at residues 8–18 (LHEIIRKLERM) is homotetramerization. A coiled-coil region spans residues 8–40 (LHEIIRKLERMNQKKQAQRKRHKLNRKERGHKS). The interval 16 to 49 (ERMNQKKQAQRKRHKLNRKERGHKSPSEQRRSEL) is disordered. The span at 23–37 (QAQRKRHKLNRKERG) shows a compositional bias: basic residues. The short motif at 26–30 (RKRHK) is the Nuclear localization signal element. The span at 38-49 (HKSPSEQRRSEL) shows a compositional bias: basic and acidic residues.

This sequence belongs to the cucumovirus/ilarvirus protein 2b family. Homodimer. Homotetramer (dimer of dimers).

The protein resides in the host nucleus. In terms of biological role, acts as a suppressor of RNA-mediated gene silencing, also known as post-transcriptional gene silencing (PTGS), a mechanism of plant viral defense that limits the accumulation of viral RNAs. Forms a homodimer to measure siRNA duplex in a length-preference mode. Binds to both siRNA duplexes (19bp) and long siRNA duplexes (30bp). The polypeptide is Suppressor of silencing 2b (Canna (Florist's daisy)).